A 505-amino-acid chain; its full sequence is ATP synthase subunit alpha (505 aa).

An ATP-binding site is contributed by 169 to 176; the sequence is GDRQIGKT.

It belongs to the ATPase alpha/beta chains family. As to quaternary structure, F-type ATPases have 2 components, CF(1) - the catalytic core - and CF(0) - the membrane proton channel. CF(1) has five subunits: alpha(3), beta(3), gamma(1), delta(1), epsilon(1). CF(0) has three main subunits: a(1), b(2) and c(9-12). The alpha and beta chains form an alternating ring which encloses part of the gamma chain. CF(1) is attached to CF(0) by a central stalk formed by the gamma and epsilon chains, while a peripheral stalk is formed by the delta and b chains.

The protein resides in the cell inner membrane. It catalyses the reaction ATP + H2O + 4 H(+)(in) = ADP + phosphate + 5 H(+)(out). Produces ATP from ADP in the presence of a proton gradient across the membrane. The alpha chain is a regulatory subunit. The chain is ATP synthase subunit alpha from Desulfosudis oleivorans (strain DSM 6200 / JCM 39069 / Hxd3) (Desulfococcus oleovorans).